Consider the following 77-residue polypeptide: Large ribosomal subunit protein bL28 (77 aa).

Belongs to the bacterial ribosomal protein bL28 family.

This is Large ribosomal subunit protein bL28 from Dechloromonas aromatica (strain RCB).